The sequence spans 386 residues: Galactokinase (386 aa).

Residue 35–38 participates in substrate binding; the sequence is EHTD. 125–131 is an ATP binding site; it reads GAGLSSS. The Mg(2+) site is built by serine 131 and glutamate 163. Aspartate 175 (proton acceptor) is an active-site residue. Tyrosine 224 contacts substrate.

The protein belongs to the GHMP kinase family. GalK subfamily.

The protein localises to the cytoplasm. It catalyses the reaction alpha-D-galactose + ATP = alpha-D-galactose 1-phosphate + ADP + H(+). Its pathway is carbohydrate metabolism; galactose metabolism. Functionally, catalyzes the transfer of the gamma-phosphate of ATP to D-galactose to form alpha-D-galactose-1-phosphate (Gal-1-P). This is Galactokinase from Vibrio cholerae serotype O1 (strain ATCC 39315 / El Tor Inaba N16961).